The chain runs to 182 residues: Helofensin-3 (182 aa).

The first 26 residues, 1–26 (MQMDWLFIAVISGIGLLSSGVPGTQG), serve as a signal peptide directing secretion. Residues 27 to 64 (AYTTEQCRALNGSCNFYACFPKNVIIGKCDWWGWSCCA) form a C(6)C(4)C(9)C(6)CC 1; approximate repeat. The stretch at 65–101 (RTPLERCTAKKGTCTKTGCTKTDTDHGPCDGGAQCCQ) is one C(6)C(4)C(9)C(6)CC 2; approximate repeat. A C(6)C(4)C(9)C(6)CC 3; approximate repeat occupies 102 to 138 (RDPVKYCKFHGNVCGRGKCPMDHIPIGECTPGYPCCK). Residues 139–176 (RDGPAYCKSKGGKCLNRCPQIVPTNVIGVCATGVPCCK) form a C(6)C(4)C(9)C(6)CC 4; approximate repeat.

This sequence belongs to the beta-defensin family. Helofensin subfamily. As to expression, expressed by the mandibular venom gland.

It is found in the secreted. Functionally, lethal toxin which possesses an inhibitory effect on direct electrical stimulation of the isolated hemi-diaphragm of mice. Neither hemorrhagic nor hemolytic activities are detected. Phospholipase A2 activity, proteolytic activity and arginine esterolytic activity are absent. In Heloderma suspectum cinctum (Banded Gila monster), this protein is Helofensin-3.